The following is a 77-amino-acid chain: U8-lycotoxin-Ls1v (77 aa).

The N-terminal stretch at 1–20 is a signal peptide; it reads MKLIIFTGLVLFGIVSLIEA. A propeptide spanning residues 21-26 is cleaved from the precursor; that stretch reads QAENEK.

Belongs to the neurotoxin 19 (CSTX) family. 08 (U8-Lctx) subfamily. Contains 4 disulfide bonds. As to expression, expressed by the venom gland.

Its subcellular location is the secreted. In Lycosa singoriensis (Wolf spider), this protein is U8-lycotoxin-Ls1v.